A 92-amino-acid polypeptide reads, in one-letter code: MMMGRIYSGNLNDYKDAVARLQEDHDVTVKMESFSYENPAKMCRSCGEVLSVFTRSGHLVASRTFEHSDSDVQINAQTAWLRKVHSELKHWK.

This is an inhibitor of the host (E.coli) dGTP triphosphohydrolase (dGTPase). It is implicated in DNA replication. The chain is Gene 1.2 protein (1.2) from Escherichia coli (Bacteriophage T3).